The primary structure comprises 146 residues: Flagellar assembly factor FliW (146 aa).

Belongs to the FliW family. As to quaternary structure, interacts with translational regulator CsrA and flagellin(s).

It localises to the cytoplasm. Its function is as follows. Acts as an anti-CsrA protein, binds CsrA and prevents it from repressing translation of its target genes, one of which is flagellin. Binds to flagellin and participates in the assembly of the flagellum. The chain is Flagellar assembly factor FliW from Azoarcus sp. (strain BH72).